The primary structure comprises 989 residues: Translation initiation factor IF-2 (989 aa).

Disordered stretches follow at residues 28 to 60 (GVTK…TDAD) and 97 to 397 (VRRD…DQNT). Composition is skewed to basic and acidic residues over residues 40 to 60 (ETDK…TDAD) and 122 to 178 (ELQR…EAAK). Positions 182–223 (AAAAEAAAREQQTQASKPAQAAQPAAAKAEPVAAKAAEPVVA) are enriched in low complexity. Over residues 231–280 (ERAAAERAAQREAAKKAEDAARQAAEKARAEQEEIAKRRAAAEAEARAIR) the composition is skewed to basic and acidic residues. Residues 318 to 345 (RPAGEAPARPAAKKPAAAAPAATTTPSA) show a composition bias toward low complexity. The segment covering 374-387 (TSGGVDRGWRGGPK) has biased composition (gly residues). Residues 489-658 (PRPPVVTVMG…LLQAEVLELK (170 aa)) form the tr-type G domain. The tract at residues 498-505 (GHVDHGKT) is G1. Residue 498-505 (GHVDHGKT) participates in GTP binding. The G2 stretch occupies residues 523-527 (GITQH). The tract at residues 544-547 (DTPG) is G3. GTP-binding positions include 544–548 (DTPGH) and 598–601 (NKID). The interval 598–601 (NKID) is G4. The tract at residues 634–636 (SAK) is G5.

The protein belongs to the TRAFAC class translation factor GTPase superfamily. Classic translation factor GTPase family. IF-2 subfamily.

It is found in the cytoplasm. In terms of biological role, one of the essential components for the initiation of protein synthesis. Protects formylmethionyl-tRNA from spontaneous hydrolysis and promotes its binding to the 30S ribosomal subunits. Also involved in the hydrolysis of GTP during the formation of the 70S ribosomal complex. The chain is Translation initiation factor IF-2 from Paraburkholderia xenovorans (strain LB400).